A 103-amino-acid chain; its full sequence is UPF0298 protein LACR_0404 (103 aa).

The protein belongs to the UPF0298 family.

It localises to the cytoplasm. The protein is UPF0298 protein LACR_0404 of Lactococcus lactis subsp. cremoris (strain SK11).